We begin with the raw amino-acid sequence, 130 residues long: Transcription antitermination protein NusB (130 aa).

Belongs to the NusB family.

Involved in transcription antitermination. Required for transcription of ribosomal RNA (rRNA) genes. Binds specifically to the boxA antiterminator sequence of the ribosomal RNA (rrn) operons. The sequence is that of Transcription antitermination protein NusB from Bacillus cereus (strain B4264).